Consider the following 807-residue polypeptide: MVLEVPSITPGELHDLMRLHQDAEWPECKKMFPWAHDISFGQPPDFPHSLAIVKSQSDANNSALLRNSLEVNDIFQSWKVRTSFHREGDTCETGNDSNGFQYPNNTKELLNLLKFQIRQLELQVDDVALENAATYCHNHSILPFLKVDPRGLSLELKRYSRNKVGSNTTLKRSGQDVWGRRGLFRRFDLQCAKMIEMVDNIVIYCSRTGGSTDMQTESAPACSHEGNCPNCTTLALLLQICLMFVQKGYVGSGGSLYKTNLFICTYQNFNTDIPQTLIGTPLLDNEFFKNNTPLNLCSSPSEIVCFNNVDKNMVLCEKLELNKLTSATRLEETGLICGNTTDWHNYQIIKKNNISLTHRFEENTSIVNLKSLNYDTDNPTTSISQLYNIPNTKEVWKLIIKCTSNSQMPSLTKIRTYLDLLLDDDASKSQEHLHLTFPASGSIGLGNLNIQSVEILLNVCYLIFQVSQVQELLTFMYCEDGYTETSLLLTAYIIFHFNIPLQDALLRIHPRPFFLFPSDLQILGHLQPVLREFSPQNGSNLKLYANALKFRDKSFQLHISSELFSSIFFMKIPLESNFVNLKGPLPSRILRHLYLGSLDHAQNPALLKSLGITHIVSVGEVVSWTLNKDKIAHPVRPHRAITMTNTNEVAGNTTCNKSRNRADTVVSDKQENGSNVVISENSGFQICQIENLDDNGKDPLFHQIDKVLDFISNSEATGGKVLVHCMVGVSRSATVCIAECMRYLQCDLASAYLFVRVRRLNVIIQPNLFFVYELFKWWKKHYNREKDKTMDWHIICRGIAEVNMKYT.

The Tyrosine-protein phosphatase domain occupies 585-783 (LPSRILRHLY…LFKWWKKHYN (199 aa)). Positions 593–807 (LYLGSLDHAQ…GIAEVNMKYT (215 aa)) are catalytic. The active-site Phosphocysteine intermediate is cysteine 725.

This sequence belongs to the protein-tyrosine phosphatase family. Non-receptor class dual specificity subfamily.

It carries out the reaction O-phospho-L-tyrosyl-[protein] + H2O = L-tyrosyl-[protein] + phosphate. The catalysed reaction is O-phospho-L-seryl-[protein] + H2O = L-seryl-[protein] + phosphate. The enzyme catalyses O-phospho-L-threonyl-[protein] + H2O = L-threonyl-[protein] + phosphate. In terms of biological role, protein phosphatase with specificity for serine, threonine, and tyrosine residues; has a role in the DNA synthesis phase of the cell cycle. This chain is Dual specificity protein phosphatase PPS1 (PPS1), found in Saccharomyces cerevisiae (strain ATCC 204508 / S288c) (Baker's yeast).